We begin with the raw amino-acid sequence, 331 residues long: ESX-3 secretion system protein EccE3 (331 aa).

Transmembrane regions (helical) follow at residues 11-31 and 37-57; these read GRVT…PWQS and LLGV…GLYF.

Belongs to the EccE family. As to quaternary structure, part of the ESX-3 / type VII secretion system (T7SS), which is composed of cytosolic and membrane components. The ESX-3 membrane complex is composed of EccB3, EccC3, EccD3 and EccE3.

Its subcellular location is the cell inner membrane. In terms of biological role, part of the ESX-3 specialized secretion system, which is important for iron and zinc uptake or homeostasis. The protein is ESX-3 secretion system protein EccE3 of Mycobacterium tuberculosis (strain CDC 1551 / Oshkosh).